A 197-amino-acid polypeptide reads, in one-letter code: ADP-ribosylation factor-like protein 6-interacting protein 1 (197 aa).

4 consecutive transmembrane segments (helical) span residues 43-63, 64-84, 129-149, and 150-170; these read VVFG…LSLI, TLLS…PMVS, TVFV…GAII, and NNLL…GLQN.

Belongs to the ARL6ip family.

The protein resides in the membrane. This chain is ADP-ribosylation factor-like protein 6-interacting protein 1, found in Drosophila melanogaster (Fruit fly).